The primary structure comprises 270 residues: Cyclic AMP-dependent transcription factor ATF-1 (270 aa).

Residues 1–91 (MEDSHKSNTS…DGENPGVSAV (91 aa)) form a disordered region. The segment covering 9 to 21 (TSETAPQSGSTVQ) has biased composition (polar residues). Positions 31–90 (QVSSLSESEESQDSSDSIGSSQKTHGILARRPSYRKILKDLSSEDIRGRKGDGENPGVSA) constitute a KID domain. Ser-63 is subject to Phosphoserine; by CaMK1, CDK3, RPS6KA4 and RPS6KA5. Residues 67-83 (ILKDLSSEDIRGRKGDG) are compositionally biased toward basic and acidic residues. The residue at position 197 (Ser-197) is a Phosphoserine; by HIPK2. Glycyl lysine isopeptide (Lys-Gly) (interchain with G-Cter in SUMO2) cross-links involve residues Lys-207 and Lys-214. The bZIP domain maps to 212–270 (QLKREIRLMKNREAARECRRKKKEYVKCLENRVAVLENQNKTLIEELKTLKDLYSNKSV). Residues 214 to 238 (KREIRLMKNREAARECRRKKKEYVK) form a basic motif region. Residues 240 to 261 (LENRVAVLENQNKTLIEELKTL) are leucine-zipper.

This sequence belongs to the bZIP family. ATF subfamily. Binds DNA as a dimer. Interacts with HIPK2 and CDK3. Interacts with MOTS-c, a peptide produced by the mitochondrially encoded 12S rRNA MT-RNR1; the interaction occurs in the nucleus following metabolic stress. In terms of processing, phosphorylated at Ser-197 by HIPK2 in response to genotoxic stress. This phosphorylation promotes transcription repression of FTH1 and other antioxidant detoxification genes. The CDK3-mediated phosphorylation at Ser-63 promotes its transactivation and transcriptional activities. Phosphorylated at Ser-63 by RPS6KA4 and RPS6KA5 in response to mitogenic or stress stimuli.

It is found in the nucleus. In terms of biological role, this protein binds the cAMP response element (CRE) (consensus: 5'-GTGACGT[AC][AG]-3'), a sequence present in many viral and cellular promoters. Mediates PKA-induced stimulation of CRE-reporter genes. Represses the expression of FTH1 and other antioxidant detoxification genes. Triggers cell proliferation and transformation. The chain is Cyclic AMP-dependent transcription factor ATF-1 (ATF1) from Bos taurus (Bovine).